The chain runs to 311 residues: MSDFTLNGIKVEDTFAEAFDVAGTAIIVTNDTPKWAMIAATVMTGFATSVIGCGAEAGIDAELSPDETPDGRPGVRILLFGFEPNGLKDQLLKRVGQCILTCPGTACFAGVEGPTKIKLGGAIRYFGDGFAVAKRLPDHEGKMRRYWRIPVMDGEFLCEDSVRAVDGAVGGGNLLFLGRKHADTLIVAEIAVEAAKAIPGAILPFPGGIVRSGSKVGGRTKGMMASTNDAYCPTLKGRAGSALPPECGVVLEIVIDALTSAAVAESMRAALHAATEIGAQHGLVAVTAGNYGGNLGRHHYHLRDLLEKPAA.

Belongs to the FTR family. In terms of assembly, homotetramer. Octaheteromer. Part of the formyltransferase/hydrolase complex fhc; composed of FhcA, FhcB, FhcC and FhcD.

The protein resides in the cytoplasm. The enzyme catalyses N-formylmethanofuran + 5,6,7,8-tetrahydromethanopterin + H(+) = N(5)-formyl-5,6,7,8-tetrahydromethanopterin + methanofuran. It participates in one-carbon metabolism; formaldehyde degradation; formate from formaldehyde (H(4)MPT route): step 4/5. In terms of biological role, involved in the transformation of 5-formyl tetrahydromethanopterin (5-formyl-H(4)MPT) to methanofuran (MFR) and formate via the intermediate formylmethanofuran (formyl-MFR). Catalyzes the transfer of a formyl group from 5-formyl-H(4)MPT to MFR to produce tetrahydromethanopterin (H(4)MPT) and formyl-MFR, which is then hydrolyzed to formate and MFR. The polypeptide is Formyltransferase/hydrolase complex subunit D (Methylorubrum extorquens (strain ATCC 14718 / DSM 1338 / JCM 2805 / NCIMB 9133 / AM1) (Methylobacterium extorquens)).